The sequence spans 954 residues: Glycine dehydrogenase (decarboxylating) (954 aa).

At lysine 706 the chain carries N6-(pyridoxal phosphate)lysine.

It belongs to the GcvP family. The glycine cleavage system is composed of four proteins: P, T, L and H. Pyridoxal 5'-phosphate is required as a cofactor.

It catalyses the reaction N(6)-[(R)-lipoyl]-L-lysyl-[glycine-cleavage complex H protein] + glycine + H(+) = N(6)-[(R)-S(8)-aminomethyldihydrolipoyl]-L-lysyl-[glycine-cleavage complex H protein] + CO2. Functionally, the glycine cleavage system catalyzes the degradation of glycine. The P protein binds the alpha-amino group of glycine through its pyridoxal phosphate cofactor; CO(2) is released and the remaining methylamine moiety is then transferred to the lipoamide cofactor of the H protein. The sequence is that of Glycine dehydrogenase (decarboxylating) from Pseudomonas syringae pv. syringae (strain B728a).